The chain runs to 189 residues: dCTP deaminase, dUMP-forming (189 aa).

DCTP is bound by residues 101–106 (KSSLGR), Asp119, 127–129 (TLE), Gln148, Tyr162, and Gln174. Glu129 functions as the Proton donor/acceptor in the catalytic mechanism. The interval 166–189 (AVGSKYQGQRGPTPSRSHLNFIKS) is disordered. Residues 171–189 (YQGQRGPTPSRSHLNFIKS) are compositionally biased toward polar residues.

This sequence belongs to the dCTP deaminase family. Homotrimer.

The catalysed reaction is dCTP + 2 H2O = dUMP + NH4(+) + diphosphate. It functions in the pathway pyrimidine metabolism; dUMP biosynthesis; dUMP from dCTP: step 1/1. In terms of biological role, bifunctional enzyme that catalyzes both the deamination of dCTP to dUTP and the hydrolysis of dUTP to dUMP without releasing the toxic dUTP intermediate. The chain is dCTP deaminase, dUMP-forming from Mycolicibacterium smegmatis (strain ATCC 700084 / mc(2)155) (Mycobacterium smegmatis).